A 639-amino-acid polypeptide reads, in one-letter code: RNA polymerase II elongation factor ELL2 (639 aa).

Disordered stretches follow at residues 175–203, 291–326, 378–416, and 439–513; these read DTVPERKRSTPMNPANTIRKMHSGNSVSQ, LNPSQNASTSRSESPLCSSKDAASSPQKRPLDSDFI, PSTHLPVSNPPQTVNSNSNSPSTPEGLGTQDLPVDSFSQ, and PSSA…EGCT. Polar residues predominate over residues 291 to 317; it reads LNPSQNASTSRSESPLCSSKDAASSPQ. A compositionally biased stretch (low complexity) spans 378-401; the sequence is PSTHLPVSNPPQTVNSNSNSPSTP. Residues 457–469 are compositionally biased toward basic residues; it reads SHKKSKKKSKKHK. A compositionally biased stretch (basic and acidic residues) spans 470-479; it reads EKDQIKKLDI. Residues 480-490 show a composition bias toward acidic residues; that stretch reads ETMEEKEEDLQ. Phosphoserine occurs at positions 501 and 579. Residues 525–635 enclose the OCEL domain; it reads PDYLIKYIAI…LIGEFDQQQA (111 aa).

It belongs to the ELL/occludin family. As to quaternary structure, component of the super elongation complex (SEC), at least composed of EAF1, EAF2, CDK9, MLLT3/AF9, AFF (AFF1 or AFF4), the P-TEFb complex and ELL (ELL, ELL2 or ELL3). Component of the little elongation complex (LEC), at least composed of ELL (ELL, ELL2 or ELL3), ZC3H8, ICE1 and ICE2. Interacts with AFF4; the interaction is direct and leads to stabilize ELL2 and prevent ELL2 ubiquitination. Interacts with EAF1 and EAF2. Post-translationally, ubiquitinated by SIAH1, leading to its degradation by the proteasome. Interaction with AFF4 stabilizes ELL2 and prevents ELL2 ubiquitination.

It localises to the nucleus. Its function is as follows. Elongation factor component of the super elongation complex (SEC), a complex required to increase the catalytic rate of RNA polymerase II transcription by suppressing transient pausing by the polymerase at multiple sites along the DNA. Component of the little elongation complex (LEC), a complex required to regulate small nuclear RNA (snRNA) gene transcription by RNA polymerase II and III. Plays a role in immunoglobulin secretion in plasma cells: directs efficient alternative mRNA processing, influencing both proximal poly(A) site choice and exon skipping, as well as immunoglobulin heavy chain (IgH) alternative processing. Probably acts by regulating histone modifications accompanying transition from membrane-specific to secretory IgH mRNA expression. The sequence is that of RNA polymerase II elongation factor ELL2 (Ell2) from Mus musculus (Mouse).